The chain runs to 669 residues: Dymeclin (669 aa).

Gly-2 carries the N-myristoyl glycine lipid modification.

It belongs to the dymeclin family. In terms of assembly, interacts with GOLM1 and PPIB. In terms of processing, myristoylated in vitro; myristoylation is not essential for protein targeting to Golgi compartment. Expressed in most embryo-fetal and adult tissues. Abundant in primary chondrocytes, osteoblasts, cerebellum, kidney, lung, stomach, heart, pancreas and fetal brain. Very low or no expression in the spleen, thymus, esophagus, bladder and thyroid gland.

The protein resides in the cytoplasm. It localises to the golgi apparatus. Its subcellular location is the membrane. Necessary for correct organization of Golgi apparatus. Involved in bone development. The protein is Dymeclin (DYM) of Homo sapiens (Human).